The primary structure comprises 798 residues: Penicillin-binding protein 1A (798 aa).

The Cytoplasmic segment spans residues 1 to 9 (MIKKIVTTC). Residues 10–30 (FGLVLGLCVFGVGLVAIAILV) traverse the membrane as a helical; Signal-anchor for type II membrane protein segment. Topologically, residues 31-798 (TYPKLPSLDS…SKQPQLDSLF (768 aa)) are periplasmic. The tract at residues 50–218 (LTIYSADGEV…SAYNPIVNPE (169 aa)) is transglycosylase. Glu-88 (proton donor; for transglycosylase activity) is an active-site residue. The transpeptidase stretch occupies residues 414-700 (VVVQEPLLQA…GTIAVPVWVD (287 aa)). Ser-461 serves as the catalytic Acyl-ester intermediate; for transpeptidase activity. The disordered stretch occupies residues 751-798 (SRRIREDKEAGAEDVERGAADEVRQEVQETPVLPSNTGSKQPQLDSLF). Basic and acidic residues predominate over residues 753-777 (RIREDKEAGAEDVERGAADEVRQEV). Positions 783-798 (LPSNTGSKQPQLDSLF) are enriched in polar residues.

The protein in the N-terminal section; belongs to the glycosyltransferase 51 family. In the C-terminal section; belongs to the transpeptidase family.

The protein localises to the cell inner membrane. It carries out the reaction [GlcNAc-(1-&gt;4)-Mur2Ac(oyl-L-Ala-gamma-D-Glu-L-Lys-D-Ala-D-Ala)](n)-di-trans,octa-cis-undecaprenyl diphosphate + beta-D-GlcNAc-(1-&gt;4)-Mur2Ac(oyl-L-Ala-gamma-D-Glu-L-Lys-D-Ala-D-Ala)-di-trans,octa-cis-undecaprenyl diphosphate = [GlcNAc-(1-&gt;4)-Mur2Ac(oyl-L-Ala-gamma-D-Glu-L-Lys-D-Ala-D-Ala)](n+1)-di-trans,octa-cis-undecaprenyl diphosphate + di-trans,octa-cis-undecaprenyl diphosphate + H(+). The catalysed reaction is Preferential cleavage: (Ac)2-L-Lys-D-Ala-|-D-Ala. Also transpeptidation of peptidyl-alanyl moieties that are N-acyl substituents of D-alanine.. It participates in cell wall biogenesis; peptidoglycan biosynthesis. In terms of biological role, cell wall formation. Synthesis of cross-linked peptidoglycan from the lipid intermediates. The enzyme has a penicillin-insensitive transglycosylase N-terminal domain (formation of linear glycan strands) and a penicillin-sensitive transpeptidase C-terminal domain (cross-linking of the peptide subunits). In Neisseria cinerea, this protein is Penicillin-binding protein 1A (mrcA).